The primary structure comprises 74 residues: Coleoptericin (74 aa).

Residues 1 to 74 form a disordered region; that stretch reads SLQGGAPNFP…TWHVGGTYRR (74 aa).

Belongs to the coleoptericin family.

It localises to the secreted. Responsible for the anti Gram-negative activity of immune hemolymph of Z.atratus. The chain is Coleoptericin from Zophobas atratus (Giant mealworm beetle).